We begin with the raw amino-acid sequence, 208 residues long: Large ribosomal subunit protein uL4 (208 aa).

This sequence belongs to the universal ribosomal protein uL4 family. In terms of assembly, part of the 50S ribosomal subunit.

In terms of biological role, one of the primary rRNA binding proteins, this protein initially binds near the 5'-end of the 23S rRNA. It is important during the early stages of 50S assembly. It makes multiple contacts with different domains of the 23S rRNA in the assembled 50S subunit and ribosome. Functionally, forms part of the polypeptide exit tunnel. The polypeptide is Large ribosomal subunit protein uL4 (Solibacter usitatus (strain Ellin6076)).